The following is a 110-amino-acid chain: Cell cycle protein GpsB (110 aa).

Residues 32 to 73 (LDDVIKDYENYLEQIEKLQMENRRLQQALDKKESEASNVRNS) adopt a coiled-coil conformation.

It belongs to the GpsB family. In terms of assembly, forms polymers through the coiled coil domains. Interacts with PBP1, MreC and EzrA.

It is found in the cytoplasm. Functionally, divisome component that associates with the complex late in its assembly, after the Z-ring is formed, and is dependent on DivIC and PBP2B for its recruitment to the divisome. Together with EzrA, is a key component of the system that regulates PBP1 localization during cell cycle progression. Its main role could be the removal of PBP1 from the cell pole after pole maturation is completed. Also contributes to the recruitment of PBP1 to the division complex. Not essential for septum formation. The chain is Cell cycle protein GpsB from Streptococcus agalactiae serotype Ia (strain ATCC 27591 / A909 / CDC SS700).